A 669-amino-acid polypeptide reads, in one-letter code: MVTGPDMLWLVITSGIACFFMAFVTGANDIANTFSTSIGSKAISIKKALIVAFFFEALGASLLGGTVTDSIRSKIINFQVFYDTPEFLMLGMCCALMGATVWLAVATRAGLPVSTTHSIIGALLGFGLATGNMKSIKWEKINNIVISWLAAPILAGTCSAIAFTVLRMLILRKKNSFEIIKKMYWFLIFLITLPFSVFLIFHNPIVINTQCKMKKDGKVIVSSPCYIEDWSAAHSFYASIICILLSSLLTAIGSFVIYIIYNKRINNYNLKKKIFCEELADIEKNPQNNFCAINNSSLNSVASNETQLTQAHNNTSNGTKQNQVGNGTKSNNNNVLVLPGDKNVKSQQDDSKTNGTQKTGSVEAYHVVHIKDNGSEDKSHENMLKKNLDKVTNMNENNNNSNKNNNSNKNNNSNKNNNSNKNNNSNNGNSNEGNGKGGDPKNMENVIIENFDPQTEIVFSSLQIISAILGVVAQSANDTANAIGPFAAVFNTYNNGIRGKIKVQWYILLFGGLSMSLGLSIMGYRVIKTVGMKLIKITPARGFTIELISGLVVLFFSICGIPLSSTHCAVSSVIGLGLVEAKMNADNKRHARKSMDKDIIQVDKDKSFTLTEKIKYPFSFLNTSCVNLRLFRTVFLSWILTVVFSATVTAGIYSFAAYSPSYIMKMQTV.

Residues M1–D6 lie on the Extracellular side of the membrane. A helical membrane pass occupies residues M7–A27. The Cytoplasmic segment spans residues N28–K47. The helical transmembrane segment at A48 to T68 threads the bilayer. Topologically, residues D69–E86 are extracellular. A helical membrane pass occupies residues F87–T107. A topological domain (cytoplasmic) is located at residue R108. Residues A109–A129 traverse the membrane as a helical segment. The Extracellular segment spans residues T130–N143. A helical membrane pass occupies residues I144–T164. Topologically, residues V165 to F186 are cytoplasmic. A helical transmembrane segment spans residues L187–I207. Over N208–S239 the chain is Extracellular. A helical transmembrane segment spans residues I240–I260. Over Y261–K502 the chain is Cytoplasmic. The span at A311 to V335 shows a compositional bias: polar residues. Disordered regions lie at residues A311–A364 and T392–E444. Over residues K342–K352 the composition is skewed to basic and acidic residues. A compositionally biased stretch (low complexity) spans N395–G433. Residues V503–G523 form a helical membrane-spanning segment. Over Y524–G542 the chain is Extracellular. The chain crosses the membrane as a helical span at residues F543 to L563. The Cytoplasmic portion of the chain corresponds to S564–R632. A helical membrane pass occupies residues T633–Y653. Residues S654–V669 are Extracellular-facing.

This sequence belongs to the inorganic phosphate transporter (PiT) (TC 2.A.20) family.

It localises to the cell membrane. It carries out the reaction 2 Na(+)(out) + phosphate(out) = 2 Na(+)(in) + phosphate(in). Its function is as follows. Sodium-phosphate symporter which preferentially transports the monovalent form of phosphate with a stoichiometry of two sodium ions per phosphate ion. The chain is Sodium-dependent phosphate transporter from Plasmodium falciparum.